Here is a 192-residue protein sequence, read N- to C-terminus: Imidazoleglycerol-phosphate dehydratase (192 aa).

The protein belongs to the imidazoleglycerol-phosphate dehydratase family.

The protein localises to the cytoplasm. The enzyme catalyses D-erythro-1-(imidazol-4-yl)glycerol 3-phosphate = 3-(imidazol-4-yl)-2-oxopropyl phosphate + H2O. It participates in amino-acid biosynthesis; L-histidine biosynthesis; L-histidine from 5-phospho-alpha-D-ribose 1-diphosphate: step 6/9. This chain is Imidazoleglycerol-phosphate dehydratase, found in Methanocella arvoryzae (strain DSM 22066 / NBRC 105507 / MRE50).